We begin with the raw amino-acid sequence, 142 residues long: Large ribosomal subunit protein uL13 (142 aa).

This sequence belongs to the universal ribosomal protein uL13 family. In terms of assembly, part of the 50S ribosomal subunit.

Functionally, this protein is one of the early assembly proteins of the 50S ribosomal subunit, although it is not seen to bind rRNA by itself. It is important during the early stages of 50S assembly. This is Large ribosomal subunit protein uL13 from Paraburkholderia phytofirmans (strain DSM 17436 / LMG 22146 / PsJN) (Burkholderia phytofirmans).